A 673-amino-acid polypeptide reads, in one-letter code: UvrABC system protein B (673 aa).

Residues 29–188 enclose the Helicase ATP-binding domain; that stretch reads EGLNDGLAHQ…LAELQYTRND (160 aa). 42 to 49 lines the ATP pocket; that stretch reads GVTGSGKT. The Beta-hairpin motif lies at 95–118; that stretch reads YYDYYQPEAYVPSSDTFIEKDASI. The Helicase C-terminal domain occupies 434-600; the sequence is QVDDVLSEIH…ALNKKVGELL (167 aa). Residues 607–632 form a disordered region; sequence KPKRGKQAVKVEEKSANTYKPKSRKE. Positions 634–669 constitute a UVR domain; that stretch reads EKELKQLEQQMRDFAKDLEFEKAAAVRDKIGQLKAV.

It belongs to the UvrB family. As to quaternary structure, forms a heterotetramer with UvrA during the search for lesions. Interacts with UvrC in an incision complex.

The protein resides in the cytoplasm. Its function is as follows. The UvrABC repair system catalyzes the recognition and processing of DNA lesions. A damage recognition complex composed of 2 UvrA and 2 UvrB subunits scans DNA for abnormalities. Upon binding of the UvrA(2)B(2) complex to a putative damaged site, the DNA wraps around one UvrB monomer. DNA wrap is dependent on ATP binding by UvrB and probably causes local melting of the DNA helix, facilitating insertion of UvrB beta-hairpin between the DNA strands. Then UvrB probes one DNA strand for the presence of a lesion. If a lesion is found the UvrA subunits dissociate and the UvrB-DNA preincision complex is formed. This complex is subsequently bound by UvrC and the second UvrB is released. If no lesion is found, the DNA wraps around the other UvrB subunit that will check the other stand for damage. In Actinobacillus pleuropneumoniae serotype 5b (strain L20), this protein is UvrABC system protein B.